A 572-amino-acid polypeptide reads, in one-letter code: Transducin-like enhancer protein 6 (572 aa).

3 disordered regions span residues M1–T30, Q92–E121, and K174–P236. Positions K14–T30 are enriched in polar residues. 7 WD repeats span residues A284–R322, T332–K372, C377–D416, G419–E456, Q458–V497, Q499–E538, and P540–T571. A Phosphoserine; by PKA modification is found at S510.

Belongs to the WD repeat Groucho/TLE family. As to quaternary structure, homodimers. Component of the subcortical maternal complex (SCMC), at least composed of NLRP5, KHDC3, OOEP, and TLE6. Within the complex, interacts with NLRP5, KHDC3 and OOEP. The SCMC may facilitate translocation of its components between the nuclear and cytoplasmic compartments. As part of the SCMC interacts with the SCMC-associated protein ZBED3. As part of the SCMC interacts with the SCMC-associated protein NLRP4F. As part of the SCMC interacts with the SCMC-associated protein CFL1/Cofilin-1. Interacts with FOXG1/BF-1; the interaction inhibits TLE1 interaction with FOXG1/BF-1. Interacts with NFATC1. Interacts with PAX6. In terms of assembly, component of the subcortical maternal complex (SCMC), at least composed of NLRP5, KHDC3L, OOEP, and TLE6 isoform 1. Within the complex, interacts with NLRP5, KHDC3L and OOEP. The SCMC may facilitate translocation of its components between the nuclear and cytoplasmic compartments.

Its subcellular location is the cytoplasm. The protein localises to the nucleus. Functionally, component of the subcortical maternal complex (SCMC), a multiprotein complex that plays a key role in early embryonic development. The SCMC complex is a structural constituent of cytoplasmic lattices, which consist in fibrous structures found in the cytoplasm of oocytes and preimplantation embryos. They are required to store maternal proteins critical for embryonic development, such as proteins that control epigenetic reprogramming of the preimplantation embryo, and prevent their degradation or activation. Also required for spermatogenesis: regulates spermatogonia proliferation and cell cycle progression, potentially via regulation of cell cycle regulatory genes such as; CEBPB, CEBPA, CSF3, PCNA, and CDK4. Suppresses FOXG1/BF-1-mediated transcriptional repression by inhibiting interaction of the transcriptional corepressor TLE1 with FOXG1 which promotes cortical neuron differentiation. Acts as a transcriptional corepressor of NFATC1-mediated gene expression by contributing to PAX6-mediated repression. Its function is as follows. Component of the subcortical maternal complex (SCMC), a multiprotein complex that plays a key role in early embryonic development. This chain is Transducin-like enhancer protein 6, found in Homo sapiens (Human).